Reading from the N-terminus, the 341-residue chain is Phenylalanine--tRNA ligase alpha subunit (341 aa).

Glu-254 is a binding site for Mg(2+).

This sequence belongs to the class-II aminoacyl-tRNA synthetase family. Phe-tRNA synthetase alpha subunit type 1 subfamily. In terms of assembly, tetramer of two alpha and two beta subunits. It depends on Mg(2+) as a cofactor.

It localises to the cytoplasm. It carries out the reaction tRNA(Phe) + L-phenylalanine + ATP = L-phenylalanyl-tRNA(Phe) + AMP + diphosphate + H(+). The protein is Phenylalanine--tRNA ligase alpha subunit of Chlorobaculum tepidum (strain ATCC 49652 / DSM 12025 / NBRC 103806 / TLS) (Chlorobium tepidum).